The primary structure comprises 245 residues: Biosynthetic peptidoglycan transglycosylase (245 aa).

Residues 19-41 (CLRWVLAAPLLFAAASVLQVLFL) form a helical membrane-spanning segment.

Belongs to the glycosyltransferase 51 family.

It is found in the cell inner membrane. It catalyses the reaction [GlcNAc-(1-&gt;4)-Mur2Ac(oyl-L-Ala-gamma-D-Glu-L-Lys-D-Ala-D-Ala)](n)-di-trans,octa-cis-undecaprenyl diphosphate + beta-D-GlcNAc-(1-&gt;4)-Mur2Ac(oyl-L-Ala-gamma-D-Glu-L-Lys-D-Ala-D-Ala)-di-trans,octa-cis-undecaprenyl diphosphate = [GlcNAc-(1-&gt;4)-Mur2Ac(oyl-L-Ala-gamma-D-Glu-L-Lys-D-Ala-D-Ala)](n+1)-di-trans,octa-cis-undecaprenyl diphosphate + di-trans,octa-cis-undecaprenyl diphosphate + H(+). It functions in the pathway cell wall biogenesis; peptidoglycan biosynthesis. Its function is as follows. Peptidoglycan polymerase that catalyzes glycan chain elongation from lipid-linked precursors. This is Biosynthetic peptidoglycan transglycosylase from Xanthomonas oryzae pv. oryzae (strain KACC10331 / KXO85).